A 413-amino-acid chain; its full sequence is von Willebrand factor A domain-containing protein 1 (413 aa).

An N-terminal signal peptide occupies residues 1-20 (MLPWTVIGLALSLRLARSGA). The VWFA domain maps to 32–211 (DLLFLLDSSA…ALRGSILDAM (180 aa)). Residues serine 72, serine 78, and serine 91 each carry the phosphoserine modification. Fibronectin type-III domains follow at residues 212-302 (WPQQ…TLPE) and 305-395 (GPEL…TPEG). Asparagine 262 is a glycosylation site (N-linked (GlcNAc...) asparagine). The tract at residues 385–413 (ALSAKACTPEGERSRAPRPQPQRTGGREP) is disordered.

As to quaternary structure, homodimer or homomultimer; disulfide-linked. Interacts with HSPG2. N-glycosylated.

Its subcellular location is the secreted. It localises to the extracellular space. It is found in the extracellular matrix. The protein localises to the basement membrane. Its function is as follows. Promotes matrix assembly. Involved in the organization of skeletal muscles and in the formation of neuromuscular junctions. The chain is von Willebrand factor A domain-containing protein 1 (VWA1) from Bos taurus (Bovine).